Reading from the N-terminus, the 337-residue chain is Trace amine-associated receptor 5 (337 aa).

The Extracellular portion of the chain corresponds to 1 to 38; it reads MRAVLLPGSGEQPTAFCYQVNGSCPRTVHPLAIQVVIY. The N-linked (GlcNAc...) asparagine glycan is linked to Asn21. Intrachain disulfides connect Cys24–Cys188 and Cys99–Cys192. Residues 39-59 form a helical membrane-spanning segment; the sequence is LACAVGVLITVLGNLFVVFAV. Topologically, residues 60 to 70 are cytoplasmic; that stretch reads SYFKVLHTPTN. A helical transmembrane segment spans residues 71-91; the sequence is FLLLSLALADMLLGLLVLPLS. Over 92-109 the chain is Extracellular; sequence TVRSVESCWFFGDFLCRL. Residues 110–130 traverse the membrane as a helical segment; the sequence is HTYLDTLFCLTSIFHLCFISI. The Cytoplasmic portion of the chain corresponds to 131 to 154; it reads DRHCAICDPLLYPSKFTVRTALRY. A helical transmembrane segment spans residues 155-175; that stretch reads IVAGWGIPAAYTAFFLYTDVV. The extracellular Loop 2 (ECL2) stretch occupies residues 176-189; it reads ERALSQWLEEMPCV. The Extracellular portion of the chain corresponds to 176 to 204; sequence ERALSQWLEEMPCVGSCQLLFNKFWGWLN. Residues 205-225 form a helical membrane-spanning segment; the sequence is FPAFFVPCLIMISLYLKIFVV. Over 226 to 253 the chain is Cytoplasmic; that stretch reads ATRQAQQIRTLSQSLAGAVKRERKAAKT. Residues 254–274 traverse the membrane as a helical segment; sequence LGIAVGIYLVCWLPFTVDTLV. Residues 275–284 are Extracellular-facing; sequence DSLLNFITPP. A helical transmembrane segment spans residues 285-307; that stretch reads LVFDIFIWFAYFNSACNPIIYVF. The Cytoplasmic segment spans residues 308 to 337; the sequence is SYRWFRKALKLLLSREIFSPRTPTVDLYHD.

Belongs to the G-protein coupled receptor 1 family. In terms of tissue distribution, specifically expressed in neurons of the olfactory epithelium, to discrete glomeruli predominantly localized to a confined bulb region. Present in the dorsal area of the main olfactory epithelium. Also present in the limbic brain areas receiving projection from the olfactory system and involved in the regulation of emotions. Also expressed in some brain regions outside the olfactory epithelium, such as the hippocampus, cerebellum, cortex, raphe nuclei, hypothalamus, and habenula.

It localises to the cell membrane. With respect to regulation, inhibited by 1-[(5,5- diphenyloxolan-2-yl)methyl]-4-(2-methoxyphenyl)piperazine and N-[(2,2-diphenyl-1,3-dioxolan-4-yl)methyl]-2-(2- methoxyphenoxy)ethan-1-amine small molecules. In terms of biological role, olfactory receptor specific for trimethylamine, a trace amine enriched in the urine of male mice, playing a role in social behavior. Also activated by N-methylpiperidine. Trimethylamine is present at high concentration in the urine of male mice after puberty and acts as an attractant. Trimethylamine-binding causes a conformation change that triggers signaling via G(s)-class of G alpha proteins (GNAL or GNAS). Also required to provide olfactory input into limbic brain areas to regulate emotional behaviors likely via modulation of the serotonin system. This chain is Trace amine-associated receptor 5, found in Mus musculus (Mouse).